The following is a 187-amino-acid chain: Peptidyl-tRNA hydrolase (187 aa).

Tyr15 is a tRNA binding site. His20 (proton acceptor) is an active-site residue. TRNA-binding residues include Phe65, Asn67, and Asn113.

The protein belongs to the PTH family. Monomer.

It is found in the cytoplasm. The catalysed reaction is an N-acyl-L-alpha-aminoacyl-tRNA + H2O = an N-acyl-L-amino acid + a tRNA + H(+). Functionally, hydrolyzes ribosome-free peptidyl-tRNAs (with 1 or more amino acids incorporated), which drop off the ribosome during protein synthesis, or as a result of ribosome stalling. Catalyzes the release of premature peptidyl moieties from peptidyl-tRNA molecules trapped in stalled 50S ribosomal subunits, and thus maintains levels of free tRNAs and 50S ribosomes. The protein is Peptidyl-tRNA hydrolase of Methylococcus capsulatus (strain ATCC 33009 / NCIMB 11132 / Bath).